The sequence spans 258 residues: Deoxyribose-phosphate aldolase (258 aa).

Asp101 serves as the catalytic Proton donor/acceptor. Catalysis depends on Lys166, which acts as the Schiff-base intermediate with acetaldehyde. Lys200 serves as the catalytic Proton donor/acceptor.

It belongs to the DeoC/FbaB aldolase family. DeoC type 2 subfamily.

The protein localises to the cytoplasm. It carries out the reaction 2-deoxy-D-ribose 5-phosphate = D-glyceraldehyde 3-phosphate + acetaldehyde. It functions in the pathway carbohydrate degradation; 2-deoxy-D-ribose 1-phosphate degradation; D-glyceraldehyde 3-phosphate and acetaldehyde from 2-deoxy-alpha-D-ribose 1-phosphate: step 2/2. Catalyzes a reversible aldol reaction between acetaldehyde and D-glyceraldehyde 3-phosphate to generate 2-deoxy-D-ribose 5-phosphate. The protein is Deoxyribose-phosphate aldolase of Haemophilus ducreyi (strain 35000HP / ATCC 700724).